The sequence spans 224 residues: UPF0758 protein lin1584 (224 aa).

The region spanning 102-224 (VIRCPEDAVK…YISLKEKGYF (123 aa)) is the MPN domain. Zn(2+)-binding residues include H173, H175, and D186. Residues 173–186 (HNHPSGDPAPSSED) carry the JAMM motif motif.

This sequence belongs to the UPF0758 family.

The polypeptide is UPF0758 protein lin1584 (Listeria innocua serovar 6a (strain ATCC BAA-680 / CLIP 11262)).